A 244-amino-acid polypeptide reads, in one-letter code: Venom nerve growth factor 1 (244 aa).

The signal sequence occupies residues Met1–Ala18. Residues Ala19 to Arg125 constitute a propeptide that is removed on maturation. The span at Gly47–Asp66 shows a compositional bias: basic and acidic residues. A disordered region spans residues Gly47 to Gln67. 3 cysteine pairs are disulfide-bonded: Cys139–Cys205, Cys181–Cys233, and Cys193–Cys235.

It belongs to the NGF-beta family. As to quaternary structure, homodimer; non-covalently linked. As to expression, expressed by the venom gland.

It is found in the secreted. Nerve growth factor is important for the development and maintenance of the sympathetic and sensory nervous systems. It stimulates division and differentiation of sympathetic and embryonic sensory neurons as well as basal forebrain cholinergic neurons in the brain. Its relevance in the snake venom is not clear. However, it has been shown to inhibit metalloproteinase-dependent proteolysis of platelet glycoprotein Ib alpha, suggesting a metalloproteinase inhibition to prevent metalloprotease autodigestion and/or protection against prey proteases. Binds a lipid between the two protein chains in the homodimer. The lipid-bound form promotes histamine relase from mouse mast cells, contrary to the lipid-free form. The chain is Venom nerve growth factor 1 from Notechis scutatus scutatus (Mainland tiger snake).